We begin with the raw amino-acid sequence, 76 residues long: Putative membrane protein insertion efficiency factor (76 aa).

The protein belongs to the UPF0161 family.

The protein localises to the cell inner membrane. In terms of biological role, could be involved in insertion of integral membrane proteins into the membrane. The polypeptide is Putative membrane protein insertion efficiency factor (Paraburkholderia phytofirmans (strain DSM 17436 / LMG 22146 / PsJN) (Burkholderia phytofirmans)).